Reading from the N-terminus, the 245-residue chain is 8-amino-3,8-dideoxy-manno-octulosonate cytidylyltransferase (245 aa).

The protein belongs to the KdsB family.

Its subcellular location is the cytoplasm. The enzyme catalyses 8-amino-3,8-dideoxy-alpha-D-manno-octulosonate + CTP = CMP-8-amino-3,8-dideoxy-alpha-D-manno-oct-2-ulosonate + diphosphate. The protein operates within bacterial outer membrane biogenesis; lipopolysaccharide biosynthesis. Activates KDO8N (a required 8-carbon sugar) for incorporation into bacterial lipopolysaccharide in the Shewanella genus. The chain is 8-amino-3,8-dideoxy-manno-octulosonate cytidylyltransferase from Shewanella woodyi (strain ATCC 51908 / MS32).